Consider the following 481-residue polypeptide: MQVADKTVVIAGLGVSGTSLAEVLRERGAHVIGVDERKPEADLRSFDDVDWDHVDYVMSSPVFNPRTPFVLEAQRRGIPVMSEVEFAWQLRVNNERTGTPAPWIGITGTNGKTSTTEMTSEMLTACGLDAPTAGNIASGDMSMSLSRCATNPQHDVLCVELSSFQLHFTDSLALDCAAITNIADDHLDWHGGRENYAADKSKVFHNAKHAIVYNAQDAKVSELAAEAQTAEGCRKVGFTLEAPQAGQIGIEDGWIVDRSGVAGGAVGEPVRLAAITDFTHLAEPDGSLYPHLVADALTALALVLGLGADRDTALKALTSFKPGGHRIETVAEAVVEGGSVRFVDDSKATNGHAARASLSSFPAKSVIWIAGGLAKGSRFEDLVKDQAHTIKAAVIIGKDQQPMIEAFASQAPDIPVTIIDPEDNDTVMDRAVEACGTYAAAGDIVLMAPACASMDQFKSYADRGNRFAAAAKTWSEVHGLH.

108–114 contacts ATP; the sequence is GTNGKTS.

Belongs to the MurCDEF family.

The protein resides in the cytoplasm. The enzyme catalyses UDP-N-acetyl-alpha-D-muramoyl-L-alanine + D-glutamate + ATP = UDP-N-acetyl-alpha-D-muramoyl-L-alanyl-D-glutamate + ADP + phosphate + H(+). Its pathway is cell wall biogenesis; peptidoglycan biosynthesis. In terms of biological role, cell wall formation. Catalyzes the addition of glutamate to the nucleotide precursor UDP-N-acetylmuramoyl-L-alanine (UMA). This chain is UDP-N-acetylmuramoylalanine--D-glutamate ligase, found in Bifidobacterium longum subsp. infantis (strain ATCC 15697 / DSM 20088 / JCM 1222 / NCTC 11817 / S12).